The chain runs to 650 residues: Chaperone protein DnaK (650 aa).

Phosphothreonine; by autocatalysis is present on T200. Residues 614-634 form a disordered region; the sequence is AGAAGAAGAAEGAAHAGGAQQ.

Belongs to the heat shock protein 70 family.

Functionally, acts as a chaperone. The sequence is that of Chaperone protein DnaK from Burkholderia cenocepacia (strain ATCC BAA-245 / DSM 16553 / LMG 16656 / NCTC 13227 / J2315 / CF5610) (Burkholderia cepacia (strain J2315)).